The primary structure comprises 1240 residues: MGKEEEKESGRNKMNCFGSVRSIFMHADGVDWLLMGLGLIGAVGDGFTTPLVLLITSKLMNNIGGSSFNTDTFMQSISKNSVALLYVACGSWVVCFLEGYCWTRTGERQTARMREKYLRAVLRQDVGYFDLHVTSTSDVITSVSSDSFVIQDVLSEKLPNFLMSASTFVGSYIVGFILLWRLAIVGLPFIVLLVIPGLMYGRALISISRKIREEYNEAGFVAEQAISSVRTVYAFSGERKTISKFSTALQGSVKLGIKQGLAKGITIGSNGITFAMWGFMSWYGSRMVMYHGAQGGTVFAVAAAIAIGGVSLGGGLSNLKYFFEAASVGERIMEVINRVPKIDSDNPDGHKLEKIRGEVEFKNVKFVYPSRLETSIFDDFCLRVPSGKTVALVGGSGSGKSTVISLLQRFYDPLAGEILIDGVSIDKLQVKWLRSQMGLVSQEPALFATTIKENILFGKEDASMDDVVEAAKASNAHNFISQLPNGYETQVGERGVQMSGGQKQRIAIARAIIKSPTILLLDEATSALDSESERVVQEALENASIGRTTILIAHRLSTIRNADVISVVKNGHIVETGSHDELMENIDGQYSTLVHLQQIEKQDINVSVKIGPISDPSKDIRNSSRVSTLSRSSSANSVTGPSTIKNLSEDNKPQLPSFKRLLAMNLPEWKQALYGCISATLFGAIQPAYAYSLGSMVSVYFLTSHDEIKEKTRIYALSFVGLAVLSFLINISQHYNFAYMGEYLTKRIRERMLSKVLTFEVGWFDRDENSSGAICSRLAKDANVVRSLVGDRMALVVQTVSAVTIAFTMGLVIAWRLALVMIAVQPVIIVCFYTRRVLLKSMSKKAIKAQDESSKLAAEAVSNVRTITAFSSQERIMKMLEKAQESPRRESIRQSWFAGFGLAMSQSLTSCTWALDFWYGGRLIQDGYITAKALFETFMILVSTGRVIADAGSMTTDLAKGSDAVGSVFAVLDRYTSIDPEDPDGYETERITGQVEFLDVDFSYPTRPDVIIFKNFSIKIEEGKSTAIVGPSGSGKSTIIGLIERFYDPLKGIVKIDGRDIRSYHLRSLRRHIALVSQEPTLFAGTIRENIIYGGVSDKIDEAEIIEAAKAANAHDFITSLTEGYDTYCGDRGVQLSGGQKQRIAIARAVLKNPSVLLLDEATSALDSQSERVVQDALERVMVGRTSVVIAHRLSTIQNCDAIAVLDKGKLVERGTHSSLLSKGPTGIYFSLVSLQTTSG.

Helical transmembrane passes span 35–55 (MGLG…VLLI), 82–102 (VALL…GYCW), 158–180 (LPNF…ILLW), 184–206 (IVGL…ALIS), 264–284 (GITI…SWYG), and 296–316 (GTVF…GGGL). Residues 35–324 (MGLGLIGAVG…GLSNLKYFFE (290 aa)) enclose the ABC transmembrane type-1 1 domain. In terms of domain architecture, ABC transporter 1 spans 359-595 (VEFKNVKFVY…IDGQYSTLVH (237 aa)). Residue 394–401 (GGSGSGKS) coordinates ATP. Asn-542, Asn-605, and Asn-622 each carry an N-linked (GlcNAc...) asparagine glycan. The tract at residues 617-646 (SKDIRNSSRVSTLSRSSSANSVTGPSTIKN) is disordered. Positions 623 to 639 (SSRVSTLSRSSSANSVT) are enriched in low complexity. N-linked (GlcNAc...) asparagine glycosylation occurs at Asn-646. Residues 672 to 960 (ALYGCISATL…AGSMTTDLAK (289 aa)) form the ABC transmembrane type-1 2 domain. 2 consecutive transmembrane segments (helical) span residues 681-701 (LFGA…SVYF) and 714-734 (IYAL…ISQH). Asn-769 carries N-linked (GlcNAc...) asparagine glycosylation. 4 helical membrane-spanning segments follow: residues 794–813 (ALVV…GLVI), 817–839 (LALV…RVLL), 895–915 (SWFA…TWAL), and 923–943 (LIQD…ILVS). An ABC transporter 2 domain is found at 995-1233 (VEFLDVDFSY…GPTGIYFSLV (239 aa)). An N-linked (GlcNAc...) asparagine glycan is attached at Asn-1015. 1030–1037 (GPSGSGKS) is an ATP binding site.

The protein belongs to the ABC transporter superfamily. ABCB family. Multidrug resistance exporter (TC 3.A.1.201) subfamily.

The protein localises to the membrane. This is ABC transporter B family member 15 (ABCB15) from Arabidopsis thaliana (Mouse-ear cress).